Reading from the N-terminus, the 252-residue chain is Type II secretion system protein N (252 aa).

Residues 1–4 (MKQK) lie on the Cytoplasmic side of the membrane. The helical transmembrane segment at 5-25 (VLIAALFLVAYLGFLLVKLPA) threads the bilayer. The Periplasmic portion of the chain corresponds to 26–252 (TLVVRHLPLP…RFPLRYQGRI (227 aa)).

Belongs to the GSP N family.

It localises to the cell inner membrane. Involved in a type II secretion system (T2SS, formerly general secretion pathway, GSP) for the export of proteins. The protein is Type II secretion system protein N (exeN) of Aeromonas hydrophila.